A 136-amino-acid chain; its full sequence is Peptide methionine sulfoxide reductase MsrB (136 aa).

In terms of domain architecture, MsrB spans 7–129; it reads SSSHENTLTE…NSASLSFTDD (123 aa). Residues Cys46, Cys49, Cys95, and Cys98 each coordinate Zn(2+). Cys118 functions as the Nucleophile in the catalytic mechanism.

The protein belongs to the MsrB Met sulfoxide reductase family. The cofactor is Zn(2+).

It catalyses the reaction L-methionyl-[protein] + [thioredoxin]-disulfide + H2O = L-methionyl-(R)-S-oxide-[protein] + [thioredoxin]-dithiol. In Erwinia tasmaniensis (strain DSM 17950 / CFBP 7177 / CIP 109463 / NCPPB 4357 / Et1/99), this protein is Peptide methionine sulfoxide reductase MsrB.